The sequence spans 399 residues: Succinate--CoA ligase [ADP-forming] subunit beta (399 aa).

In terms of domain architecture, ATP-grasp spans 9 to 254 (KAVLAEFGVA…ESEEDPKEIE (246 aa)). ATP contacts are provided by residues Lys-46, 53-55 (GRG), Glu-109, Ala-112, and Glu-117. Asn-209 and Asp-223 together coordinate Mg(2+). Substrate-binding positions include Asn-274 and 331–333 (GIM).

Belongs to the succinate/malate CoA ligase beta subunit family. In terms of assembly, heterotetramer of two alpha and two beta subunits. Mg(2+) is required as a cofactor.

The catalysed reaction is succinate + ATP + CoA = succinyl-CoA + ADP + phosphate. The enzyme catalyses GTP + succinate + CoA = succinyl-CoA + GDP + phosphate. It participates in carbohydrate metabolism; tricarboxylic acid cycle; succinate from succinyl-CoA (ligase route): step 1/1. Its function is as follows. Succinyl-CoA synthetase functions in the citric acid cycle (TCA), coupling the hydrolysis of succinyl-CoA to the synthesis of either ATP or GTP and thus represents the only step of substrate-level phosphorylation in the TCA. The beta subunit provides nucleotide specificity of the enzyme and binds the substrate succinate, while the binding sites for coenzyme A and phosphate are found in the alpha subunit. The protein is Succinate--CoA ligase [ADP-forming] subunit beta of Phenylobacterium zucineum (strain HLK1).